Consider the following 60-residue polypeptide: Cytotoxin 2 (60 aa).

4 disulfide bridges follow: cysteine 3–cysteine 21, cysteine 14–cysteine 38, cysteine 42–cysteine 53, and cysteine 54–cysteine 59.

This sequence belongs to the three-finger toxin family. Short-chain subfamily. Type IA cytotoxin sub-subfamily. In terms of assembly, monomer in solution; Homodimer and oligomer in the presence of negatively charged lipids forming a pore with a size ranging between 20 and 30 Angstroms. In terms of tissue distribution, expressed by the venom gland.

The protein localises to the secreted. Its subcellular location is the target cell membrane. Shows cytolytic activity on many different cells by forming pore in lipid membranes. In vivo, increases heart rate or kills the animal by cardiac arrest. In addition, it binds to heparin with high affinity, interacts with Kv channel-interacting protein 1 (KCNIP1) in a calcium-independent manner, and binds to integrin alpha-V/beta-3 (ITGAV/ITGB3) with moderate affinity. The protein is Cytotoxin 2 of Naja annulifera (Banded Egyptian cobra).